The sequence spans 342 residues: Probable dual-specificity RNA methyltransferase RlmN (342 aa).

The active-site Proton acceptor is the E91. One can recognise a Radical SAM core domain in the interval 97–327; the sequence is YKHGNSICVS…TTIRREMGAD (231 aa). A disulfide bridge connects residues C104 and C332. [4Fe-4S] cluster-binding residues include C111, C115, and C118. Residues 158 to 159, S190, 213 to 215, and N289 each bind S-adenosyl-L-methionine; these read GE and SLH. The S-methylcysteine intermediate role is filled by C332.

This sequence belongs to the radical SAM superfamily. RlmN family. It depends on [4Fe-4S] cluster as a cofactor.

It localises to the cytoplasm. It catalyses the reaction adenosine(2503) in 23S rRNA + 2 reduced [2Fe-2S]-[ferredoxin] + 2 S-adenosyl-L-methionine = 2-methyladenosine(2503) in 23S rRNA + 5'-deoxyadenosine + L-methionine + 2 oxidized [2Fe-2S]-[ferredoxin] + S-adenosyl-L-homocysteine. It carries out the reaction adenosine(37) in tRNA + 2 reduced [2Fe-2S]-[ferredoxin] + 2 S-adenosyl-L-methionine = 2-methyladenosine(37) in tRNA + 5'-deoxyadenosine + L-methionine + 2 oxidized [2Fe-2S]-[ferredoxin] + S-adenosyl-L-homocysteine. Specifically methylates position 2 of adenine 2503 in 23S rRNA and position 2 of adenine 37 in tRNAs. This Clostridium botulinum (strain Langeland / NCTC 10281 / Type F) protein is Probable dual-specificity RNA methyltransferase RlmN.